The primary structure comprises 427 residues: Endothelin-1 receptor (427 aa).

Positions 1 to 20 (METFWLRLSFWVALVGGVIS) are cleaved as a signal peptide. Topologically, residues 21–80 (DNPESYSTNLSIHVDSVATFHGTELSFVVTTHQPTNLALPSNGSMHNYCPQQTKITSAFK) are extracellular. N-linked (GlcNAc...) asparagine glycosylation is found at N29 and N62. A helical transmembrane segment spans residues 81–102 (YINTVISCTIFIVGMVGNATLL). Topologically, residues 103–112 (RIIYQNKCMR) are cytoplasmic. A helical transmembrane segment spans residues 113–132 (NGPNALIASLALGDLIYVVI). Over 133-159 (DLPINVFKLLAGRWPFEQNDFGVFLCK) the chain is Extracellular. Residues C158 and C239 are joined by a disulfide bond. Residues 160 to 181 (LFPFLQKSSVGITVLNLCALSV) form a helical membrane-spanning segment. Residues 182–205 (DRYRAVASWSRVQGIGIPLVTAIE) lie on the Cytoplasmic side of the membrane. A helical membrane pass occupies residues 206-229 (IVSIWILSFILAIPEAIGFVMVPF). Over 230–256 (EYKGAQHRTCMLNATSKFMEFYQDVKD) the chain is Extracellular. The chain crosses the membrane as a helical span at residues 257-278 (WWLFGFYFCMPLVCTAIFYTLM). At 279-306 (TCEMLNRRNGSLRIALSEHLKQRREVAK) the chain is on the cytoplasmic side. Residues 307-328 (TVFCLVVIFALCWFPLHLSRIL) traverse the membrane as a helical segment. The Extracellular segment spans residues 329–347 (KKTVYDEMDTNRCELLSFL). The helical transmembrane segment at 348-372 (LLMDYIGINLATMNSCINPIALYFV) threads the bilayer. Topologically, residues 373 to 427 (SKKFKNCFQSCLCCCCYQSKSLMTSVPMNGTSIQWKNHEQNNHNTERSSHKDSIN) are cytoplasmic. The residue at position 425 (S425) is a Phosphoserine.

This sequence belongs to the G-protein coupled receptor 1 family. Endothelin receptor subfamily. EDNRA sub-subfamily. In terms of assembly, interacts with HDAC7 and KAT5.

It is found in the cell membrane. Functionally, receptor for endothelin-1. Mediates its action by association with G proteins that activate a phosphatidylinositol-calcium second messenger system. The rank order of binding affinities for ET-A is: ET1 &gt; ET2 &gt;&gt; ET3. This Bos taurus (Bovine) protein is Endothelin-1 receptor.